The following is a 144-amino-acid chain: Putative sugar phosphate isomerase RBE_0278 (144 aa).

His-12 lines the substrate pocket. His-101 acts as the Proton donor in catalysis. Arg-135 is a substrate binding site.

Belongs to the LacAB/RpiB family.

This chain is Putative sugar phosphate isomerase RBE_0278, found in Rickettsia bellii (strain RML369-C).